An 802-amino-acid polypeptide reads, in one-letter code: DNA mismatch repair protein MutS (802 aa).

Residue 617 to 624 participates in ATP binding; sequence GPNMGGKS.

It belongs to the DNA mismatch repair MutS family.

This protein is involved in the repair of mismatches in DNA. It is possible that it carries out the mismatch recognition step. This protein has a weak ATPase activity. The chain is DNA mismatch repair protein MutS from Buchnera aphidicola subsp. Acyrthosiphon pisum (strain 5A).